The sequence spans 262 residues: Hydroxyethylthiazole kinase (262 aa).

Met50 contributes to the substrate binding site. Residues Arg125 and Thr171 each coordinate ATP. Gly198 serves as a coordination point for substrate.

The protein belongs to the Thz kinase family. Mg(2+) is required as a cofactor.

It carries out the reaction 5-(2-hydroxyethyl)-4-methylthiazole + ATP = 4-methyl-5-(2-phosphooxyethyl)-thiazole + ADP + H(+). It functions in the pathway cofactor biosynthesis; thiamine diphosphate biosynthesis; 4-methyl-5-(2-phosphoethyl)-thiazole from 5-(2-hydroxyethyl)-4-methylthiazole: step 1/1. In terms of biological role, catalyzes the phosphorylation of the hydroxyl group of 4-methyl-5-beta-hydroxyethylthiazole (THZ). In Escherichia fergusonii (strain ATCC 35469 / DSM 13698 / CCUG 18766 / IAM 14443 / JCM 21226 / LMG 7866 / NBRC 102419 / NCTC 12128 / CDC 0568-73), this protein is Hydroxyethylthiazole kinase.